Consider the following 368-residue polypeptide: High affinity transport system protein p37 (368 aa).

Positions 1 to 25 (MLFKKFTWVIPSLFLTIISTSLLIS) are cleaved as a signal peptide. Residue cysteine 26 is the site of N-palmitoyl cysteine attachment. Cysteine 26 is lipidated: S-diacylglycerol cysteine.

It is found in the cell membrane. Functionally, P37 is part of a high-affinity transport system. This is High affinity transport system protein p37 (p37) from Mycoplasma genitalium (strain ATCC 33530 / DSM 19775 / NCTC 10195 / G37) (Mycoplasmoides genitalium).